Reading from the N-terminus, the 108-residue chain is Parvalbumin beta (108 aa).

EF-hand domains are found at residues 38–73 and 77–108; these read KPTDQVKKVFDILDQDKSGYIEEDELQLFLKNFCSS and LSNAETKAFLFAGDSDGDGKIGVDEFQALVRS. Ca(2+) contacts are provided by D51, D53, S55, Y57, E59, E62, D90, D92, D94, K96, and E101.

The protein belongs to the parvalbumin family.

Its function is as follows. In muscle, parvalbumin is thought to be involved in relaxation after contraction. It binds two calcium ions. This chain is Parvalbumin beta, found in Amphiuma means (Salamander).